A 431-amino-acid polypeptide reads, in one-letter code: 3-phosphoshikimate 1-carboxyvinyltransferase (431 aa).

3-phosphoshikimate is bound by residues K22, S23, and R27. K22 is a phosphoenolpyruvate binding site. Phosphoenolpyruvate-binding residues include G94 and R122. The 3-phosphoshikimate site is built by S167, Q169, D315, and K342. A phosphoenolpyruvate-binding site is contributed by Q169. D315 functions as the Proton acceptor in the catalytic mechanism. 2 residues coordinate phosphoenolpyruvate: R346 and R388.

This sequence belongs to the EPSP synthase family. Monomer.

The protein resides in the cytoplasm. It catalyses the reaction 3-phosphoshikimate + phosphoenolpyruvate = 5-O-(1-carboxyvinyl)-3-phosphoshikimate + phosphate. It participates in metabolic intermediate biosynthesis; chorismate biosynthesis; chorismate from D-erythrose 4-phosphate and phosphoenolpyruvate: step 6/7. Its function is as follows. Catalyzes the transfer of the enolpyruvyl moiety of phosphoenolpyruvate (PEP) to the 5-hydroxyl of shikimate-3-phosphate (S3P) to produce enolpyruvyl shikimate-3-phosphate and inorganic phosphate. This chain is 3-phosphoshikimate 1-carboxyvinyltransferase, found in Pelobacter propionicus (strain DSM 2379 / NBRC 103807 / OttBd1).